The chain runs to 76 residues: DNA-directed RNA polymerase subunit epsilon (76 aa).

Belongs to the RNA polymerase subunit epsilon family. As to quaternary structure, RNAP is composed of a core of 2 alpha, a beta and a beta' subunit. The core is associated with a delta subunit, and at least one of epsilon or omega. When a sigma factor is associated with the core the holoenzyme is formed, which can initiate transcription.

It catalyses the reaction RNA(n) + a ribonucleoside 5'-triphosphate = RNA(n+1) + diphosphate. A non-essential component of RNA polymerase (RNAP). This chain is DNA-directed RNA polymerase subunit epsilon, found in Streptococcus equi subsp. zooepidemicus (strain H70).